A 384-amino-acid polypeptide reads, in one-letter code: Protein V (384 aa).

Disordered stretches follow at residues 1–23 (MDQD…GGRE) and 38–317 (SEPT…TKKG). A compositionally biased stretch (basic and acidic residues) spans 7–20 (ILKEDSEVEREAPG). The span at 50–59 (LHNTINTPQG) shows a compositional bias: polar residues. Phosphoserine; by host is present on S68. Over residues 83–101 (RSGEESRVSGRTSKPEAEA) the composition is skewed to basic and acidic residues. The residue at position 125 (S125) is a Phosphoserine; by host. Basic and acidic residues predominate over residues 150 to 168 (GIEDENREMAAHPDKRGED). Residues 191–206 (ASNNGRSMEPGSSHSA) show a composition bias toward polar residues. 4 positions are modified to phosphoserine; by host: S192, S249, S257, and S260. The Zn(2+) site is built by H318, C337, C341, C353, C355, C358, C362, and C365.

Belongs to the paramyxoviruses V protein family. Interacts with host IFIH1/MDA5 and DHX58/LGP2. Interacts with host IRF3. Interacts with host RIGI regulatory protein (via CARDs domain) and host TRIM25 (via SPRY domain); these interactions prevent TRIM25-mediated ubiquitination of RIG-I and disrupts downstream RIG-I signaling.

Its subcellular location is the host cytoplasm. In terms of biological role, plays an essential role in the inhibition of host immune response. Prevents the establishment of cellular antiviral state by blocking interferon-alpha/beta (IFN-alpha/beta) production and signaling pathway. Interacts with host IFIH1/MDA5 and DHX58/LGP2 to inhibit the transduction pathway involved in the activation of IFN-beta promoter, thus protecting the virus against cell antiviral state. Also interacts with and inhibits host IRF3. Blocks the type I interferon signaling pathway by disrupting the RIG-I signaling pathway. This is Protein V (P/V/C) from Sendai virus (strain Z) (SeV).